The primary structure comprises 549 residues: Glucose-6-phosphate isomerase (549 aa).

Residue Glu355 is the Proton donor of the active site. Catalysis depends on residues His386 and Lys514.

Belongs to the GPI family.

It localises to the cytoplasm. It carries out the reaction alpha-D-glucose 6-phosphate = beta-D-fructose 6-phosphate. It functions in the pathway carbohydrate biosynthesis; gluconeogenesis. It participates in carbohydrate degradation; glycolysis; D-glyceraldehyde 3-phosphate and glycerone phosphate from D-glucose: step 2/4. Functionally, catalyzes the reversible isomerization of glucose-6-phosphate to fructose-6-phosphate. This Buchnera aphidicola subsp. Acyrthosiphon pisum (strain APS) (Acyrthosiphon pisum symbiotic bacterium) protein is Glucose-6-phosphate isomerase.